A 154-amino-acid chain; its full sequence is Ascorbate-specific PTS system EIIA component (154 aa).

One can recognise a PTS EIIA type-2 domain in the interval 6–150 (SLAENNSIRL…QEVLDLIDRT (145 aa)). The active-site Tele-phosphohistidine intermediate is the H68. H68 carries the post-translational modification Phosphohistidine.

It is found in the cytoplasm. In terms of biological role, the phosphoenolpyruvate-dependent sugar phosphotransferase system (sugar PTS), a major carbohydrate active transport system, catalyzes the phosphorylation of incoming sugar substrates concomitantly with their translocation across the cell membrane. The enzyme II UlaABC PTS system is involved in ascorbate transport. The protein is Ascorbate-specific PTS system EIIA component (ulaC) of Salmonella choleraesuis (strain SC-B67).